A 297-amino-acid chain; its full sequence is Putative thiosulfate sulfurtransferase SseA (297 aa).

2 Rhodanese domains span residues 31 to 138 (GAPG…ETTL) and 168 to 286 (ILGA…VPIV). C245 functions as the Cysteine persulfide intermediate in the catalytic mechanism. R250 is a binding site for substrate.

It catalyses the reaction thiosulfate + hydrogen cyanide = thiocyanate + sulfite + 2 H(+). This chain is Putative thiosulfate sulfurtransferase SseA (sseA), found in Mycobacterium tuberculosis (strain CDC 1551 / Oshkosh).